The following is a 78-amino-acid chain: Small ribosomal subunit protein uS17 (78 aa).

The protein belongs to the universal ribosomal protein uS17 family. In terms of assembly, part of the 30S ribosomal subunit.

Functionally, one of the primary rRNA binding proteins, it binds specifically to the 5'-end of 16S ribosomal RNA. This chain is Small ribosomal subunit protein uS17, found in Maricaulis maris (strain MCS10) (Caulobacter maris).